Reading from the N-terminus, the 125-residue chain is Large ribosomal subunit protein bL12 (125 aa).

Belongs to the bacterial ribosomal protein bL12 family. In terms of assembly, homodimer. Part of the ribosomal stalk of the 50S ribosomal subunit. Forms a multimeric L10(L12)X complex, where L10 forms an elongated spine to which 2 to 4 L12 dimers bind in a sequential fashion. Binds GTP-bound translation factors.

In terms of biological role, forms part of the ribosomal stalk which helps the ribosome interact with GTP-bound translation factors. Is thus essential for accurate translation. This is Large ribosomal subunit protein bL12 from Granulibacter bethesdensis (strain ATCC BAA-1260 / CGDNIH1).